A 376-amino-acid polypeptide reads, in one-letter code: Chaperone protein DnaJ (376 aa).

One can recognise a J domain in the interval 5-70 (DYYEILGVSK…QKRAAYDQYG (66 aa)). The CR-type zinc-finger motif lies at 131–209 (GVTKEIRIPT…CHGHGRVERS (79 aa)). The Zn(2+) site is built by C144, C147, C161, C164, C183, C186, C197, and C200. 4 CXXCXGXG motif repeats span residues 144–151 (CDVCHGSG), 161–168 (CPTCHGSG), 183–190 (CPHCQGRG), and 197–204 (CNKCHGHG).

Belongs to the DnaJ family. In terms of assembly, homodimer. Requires Zn(2+) as cofactor.

It localises to the cytoplasm. In terms of biological role, participates actively in the response to hyperosmotic and heat shock by preventing the aggregation of stress-denatured proteins and by disaggregating proteins, also in an autonomous, DnaK-independent fashion. Unfolded proteins bind initially to DnaJ; upon interaction with the DnaJ-bound protein, DnaK hydrolyzes its bound ATP, resulting in the formation of a stable complex. GrpE releases ADP from DnaK; ATP binding to DnaK triggers the release of the substrate protein, thus completing the reaction cycle. Several rounds of ATP-dependent interactions between DnaJ, DnaK and GrpE are required for fully efficient folding. Also involved, together with DnaK and GrpE, in the DNA replication of plasmids through activation of initiation proteins. This is Chaperone protein DnaJ from Shigella dysenteriae serotype 1 (strain Sd197).